The following is a 276-amino-acid chain: Tryptophan synthase alpha chain (276 aa).

Residues E55 and D66 each act as proton acceptor in the active site.

The protein belongs to the TrpA family. In terms of assembly, tetramer of two alpha and two beta chains.

The enzyme catalyses (1S,2R)-1-C-(indol-3-yl)glycerol 3-phosphate + L-serine = D-glyceraldehyde 3-phosphate + L-tryptophan + H2O. It participates in amino-acid biosynthesis; L-tryptophan biosynthesis; L-tryptophan from chorismate: step 5/5. The alpha subunit is responsible for the aldol cleavage of indoleglycerol phosphate to indole and glyceraldehyde 3-phosphate. In Gloeobacter violaceus (strain ATCC 29082 / PCC 7421), this protein is Tryptophan synthase alpha chain.